The sequence spans 510 residues: NAD(P)H-quinone oxidoreductase subunit 2 A, chloroplastic (510 aa).

13 helical membrane passes run leucine 24 to leucine 44, isoleucine 57 to phenylalanine 77, isoleucine 99 to isoleucine 119, methionine 124 to cysteine 144, leucine 149 to tyrosine 169, tyrosine 183 to glycine 203, proline 227 to alanine 247, tryptophan 295 to isoleucine 315, methionine 323 to aspartate 343, tyrosine 354 to leucine 374, alanine 395 to phenylalanine 415, leucine 418 to leucine 438, and methionine 484 to isoleucine 504.

It belongs to the complex I subunit 2 family. As to quaternary structure, NDH is composed of at least 16 different subunits, 5 of which are encoded in the nucleus.

The protein localises to the plastid. It localises to the chloroplast thylakoid membrane. The enzyme catalyses a plastoquinone + NADH + (n+1) H(+)(in) = a plastoquinol + NAD(+) + n H(+)(out). It catalyses the reaction a plastoquinone + NADPH + (n+1) H(+)(in) = a plastoquinol + NADP(+) + n H(+)(out). Its function is as follows. NDH shuttles electrons from NAD(P)H:plastoquinone, via FMN and iron-sulfur (Fe-S) centers, to quinones in the photosynthetic chain and possibly in a chloroplast respiratory chain. The immediate electron acceptor for the enzyme in this species is believed to be plastoquinone. Couples the redox reaction to proton translocation, and thus conserves the redox energy in a proton gradient. The chain is NAD(P)H-quinone oxidoreductase subunit 2 A, chloroplastic from Ranunculus macranthus (Large buttercup).